Reading from the N-terminus, the 278-residue chain is Polyamine aminopropyltransferase (278 aa).

One can recognise a PABS domain in the interval 5–238 (ELWFTEQQTP…GLWSFTLGSK (234 aa)). Residue Q34 participates in S-methyl-5'-thioadenosine binding. The spermidine site is built by H65 and D89. S-methyl-5'-thioadenosine contacts are provided by residues E109 and 140-141 (DG). Residue D158 is the Proton acceptor of the active site. 158–161 (DSTD) serves as a coordination point for spermidine. P165 contacts S-methyl-5'-thioadenosine.

The protein belongs to the spermidine/spermine synthase family. As to quaternary structure, homodimer or homotetramer.

The protein resides in the cytoplasm. It catalyses the reaction S-adenosyl 3-(methylsulfanyl)propylamine + putrescine = S-methyl-5'-thioadenosine + spermidine + H(+). It participates in amine and polyamine biosynthesis; spermidine biosynthesis; spermidine from putrescine: step 1/1. Its function is as follows. Catalyzes the irreversible transfer of a propylamine group from the amino donor S-adenosylmethioninamine (decarboxy-AdoMet) to putrescine (1,4-diaminobutane) to yield spermidine. This chain is Polyamine aminopropyltransferase, found in Caldicellulosiruptor bescii (strain ATCC BAA-1888 / DSM 6725 / KCTC 15123 / Z-1320) (Anaerocellum thermophilum).